Here is a 335-residue protein sequence, read N- to C-terminus: HTH-type transcriptional regulator LacR (335 aa).

Residues 1–58 enclose the HTH lacI-type domain; it reads MRTIKEIALESGYSPATVSRLLNNDPNLSITADTKNKILEIANKLGYWEDHQEKKIKP. A DNA-binding region (H-T-H motif) is located at residues 4 to 23; that stretch reads IKEIALESGYSPATVSRLLN.

Its pathway is carbohydrate metabolism; lactose degradation [regulation]. Negatively regulates the transcription of the lactose utilization genes lacL and lacM. The chain is HTH-type transcriptional regulator LacR (lacR) from Lactobacillus helveticus (Lactobacillus suntoryeus).